The chain runs to 1927 residues: Integrin beta-like protein A (1927 aa).

Positions 1–20 (MNRILTLFILFISLFIVCEA) are cleaved as a signal peptide. Topologically, residues 21–1860 (THFRFGTMSW…KENNNKTVLT (1840 aa)) are extracellular. Asn-309 carries N-linked (GlcNAc...) asparagine glycosylation. The region spanning 425-462 (YGEKCDPVDPCVNGESNEGSQGNGKCTCYYGWEGKNCD) is the EGF-like domain. Intrachain disulfides connect Cys-435/Cys-450 and Cys-452/Cys-461. Positions 522–709 (EVLVLVDSQP…VLSKAVVKAI (188 aa)) constitute a VWFA domain. Asn-1122, Asn-1516, Asn-1717, Asn-1723, and Asn-1855 each carry an N-linked (GlcNAc...) asparagine glycan. Residues 1861–1881 (GAIAGAAAGAGLLAAGAWFLL) traverse the membrane as a helical segment. At 1882-1927 (KKSAPPTDAFFGEGAFADGAVSTNPMYEESGRSAINPLYEASSENL) the chain is on the cytoplasmic side.

This sequence belongs to the SIB family. Interacts with talA/talin.

It localises to the membrane. Its function is as follows. Implicated in cellular adhesion to substrate or phagocytic particles. The sequence is that of Integrin beta-like protein A (sibA) from Dictyostelium discoideum (Social amoeba).